The primary structure comprises 581 residues: DNA primase (581 aa).

The CHC2-type zinc finger occupies 40–64 (CPFHNEKTPSFTVNGEKQFYHCFGC). The region spanning 259 to 341 (NRLLVVEGYM…GRQLRFMFLP (83 aa)) is the Toprim domain. The Mg(2+) site is built by Glu-265, Asp-309, and Asp-311.

This sequence belongs to the DnaG primase family. Monomer. Interacts with DnaB. Zn(2+) is required as a cofactor. It depends on Mg(2+) as a cofactor.

The enzyme catalyses ssDNA + n NTP = ssDNA/pppN(pN)n-1 hybrid + (n-1) diphosphate.. RNA polymerase that catalyzes the synthesis of short RNA molecules used as primers for DNA polymerase during DNA replication. This is DNA primase from Escherichia coli O6:H1 (strain CFT073 / ATCC 700928 / UPEC).